The sequence spans 636 residues: p-hydroxybenzoate-m-hydroxylase A (636 aa).

FAD contacts are provided by residues 10 to 39 (DIVIVGAGPVGIVLSLCMSRWGYKVKHIDN), 241 to 243 (RLY), Tyr-289, and Asp-310. A helical transmembrane segment spans residues 11-28 (IVIVGAGPVGIVLSLCMS).

Belongs to the PheA/TfdB FAD monooxygenase family. FAD serves as cofactor.

The protein localises to the membrane. The enzyme catalyses 4-hydroxybenzoate + NADH + O2 + H(+) = 3,4-dihydroxybenzoate + NAD(+) + H2O. The catalysed reaction is 4-hydroxybenzoate + NADPH + O2 + H(+) = 3,4-dihydroxybenzoate + NADP(+) + H2O. In terms of biological role, FAD-dependent monooxygenase; part of the benzoic acid degradation pathway also known as the protocatechuic acid pathway. Benzoic acid debradation begins with the conversion of benzoic acid into 4-hydroxybenzoic acid through hydroxylation by the benzoate-4-monooxygenase bphA, and its partner NADPH-cytochrome P450 reductase cprA which act as a mediator in electron donation from NADPH. 4-Hydroxybenzoic acid is then converted into 3,4-dihydroxybenzoic acid (also called protocatechuic acid) by the p-hydroxybenzoate-m-hydroxylase phhA. Protocatechuic acid is converted into 3-carboxy-cis,cis-muconic acid by the intradiol ring-cleavage dioxygenase prcA, which is further metabolized through the 3-oxoadipate pathway to finally enter the tricarboxylic acid cycle (TCA). This chain is p-hydroxybenzoate-m-hydroxylase A, found in Aspergillus niger (strain ATCC MYA-4892 / CBS 513.88 / FGSC A1513).